The following is a 215-amino-acid chain: Probable transaldolase (215 aa).

Lysine 83 acts as the Schiff-base intermediate with substrate in catalysis.

The protein belongs to the transaldolase family. Type 3B subfamily.

Its subcellular location is the cytoplasm. The enzyme catalyses D-sedoheptulose 7-phosphate + D-glyceraldehyde 3-phosphate = D-erythrose 4-phosphate + beta-D-fructose 6-phosphate. It functions in the pathway carbohydrate degradation; pentose phosphate pathway; D-glyceraldehyde 3-phosphate and beta-D-fructose 6-phosphate from D-ribose 5-phosphate and D-xylulose 5-phosphate (non-oxidative stage): step 2/3. Transaldolase is important for the balance of metabolites in the pentose-phosphate pathway. The protein is Probable transaldolase of Bdellovibrio bacteriovorus (strain ATCC 15356 / DSM 50701 / NCIMB 9529 / HD100).